Consider the following 247-residue polypeptide: 5'-nucleotidase SurE (247 aa).

Residues Asp8, Asp9, Ser39, and Asn91 each coordinate a divalent metal cation.

It belongs to the SurE nucleotidase family. Requires a divalent metal cation as cofactor.

It localises to the cytoplasm. The enzyme catalyses a ribonucleoside 5'-phosphate + H2O = a ribonucleoside + phosphate. Nucleotidase that shows phosphatase activity on nucleoside 5'-monophosphates. The chain is 5'-nucleotidase SurE from Pelobacter propionicus (strain DSM 2379 / NBRC 103807 / OttBd1).